A 438-amino-acid chain; its full sequence is Aspartate--tRNA(Asp/Asn) ligase (438 aa).

Glu176 serves as a coordination point for L-aspartate. Residues 198 to 201 are aspartate; it reads QLYK. Arg220 serves as a coordination point for L-aspartate. ATP-binding positions include 220-222, 228-230, and Glu361; these read RAE and RHL. Residues Glu361 and Ser364 each coordinate Mg(2+). L-aspartate contacts are provided by Ser364 and Arg368. 409–412 lines the ATP pocket; sequence GIER.

The protein belongs to the class-II aminoacyl-tRNA synthetase family. Type 2 subfamily. In terms of assembly, homodimer. Mg(2+) is required as a cofactor.

The protein resides in the cytoplasm. The catalysed reaction is tRNA(Asx) + L-aspartate + ATP = L-aspartyl-tRNA(Asx) + AMP + diphosphate. In terms of biological role, aspartyl-tRNA synthetase with relaxed tRNA specificity since it is able to aspartylate not only its cognate tRNA(Asp) but also tRNA(Asn). Reaction proceeds in two steps: L-aspartate is first activated by ATP to form Asp-AMP and then transferred to the acceptor end of tRNA(Asp/Asn). This Methanococcus aeolicus (strain ATCC BAA-1280 / DSM 17508 / OCM 812 / Nankai-3) protein is Aspartate--tRNA(Asp/Asn) ligase.